The chain runs to 273 residues: Phosphate import ATP-binding protein PstB (273 aa).

The ABC transporter domain occupies 27–268 (VTVRNLNFYY…PSDRRTQDYI (242 aa)). 59-66 (GPSGCGKS) contributes to the ATP binding site.

This sequence belongs to the ABC transporter superfamily. Phosphate importer (TC 3.A.1.7) family. The complex is composed of two ATP-binding proteins (PstB), two transmembrane proteins (PstC and PstA) and a solute-binding protein (PstS).

It localises to the cell inner membrane. The enzyme catalyses phosphate(out) + ATP + H2O = ADP + 2 phosphate(in) + H(+). Functionally, part of the ABC transporter complex PstSACB involved in phosphate import. Responsible for energy coupling to the transport system. The chain is Phosphate import ATP-binding protein PstB from Bradyrhizobium diazoefficiens (strain JCM 10833 / BCRC 13528 / IAM 13628 / NBRC 14792 / USDA 110).